The primary structure comprises 226 residues: 7-cyano-7-deazaguanine synthase (226 aa).

10–20 is a binding site for ATP; it reads LSGGLDSATAA. Zn(2+)-binding residues include Cys-191, Cys-199, Cys-202, and Cys-205.

The protein belongs to the QueC family. Zn(2+) is required as a cofactor.

The enzyme catalyses 7-carboxy-7-deazaguanine + NH4(+) + ATP = 7-cyano-7-deazaguanine + ADP + phosphate + H2O + H(+). The protein operates within purine metabolism; 7-cyano-7-deazaguanine biosynthesis. Its function is as follows. Catalyzes the ATP-dependent conversion of 7-carboxy-7-deazaguanine (CDG) to 7-cyano-7-deazaguanine (preQ(0)). This is 7-cyano-7-deazaguanine synthase from Synechococcus sp. (strain CC9605).